The chain runs to 775 residues: Dipeptidyl peptidase 4 (775 aa).

An N-terminal signal peptide occupies residues 1-15 (MKFLSLLLLAGIAQA). Asn81, Asn111, Asn170, and Asn219 each carry an N-linked (GlcNAc...) asparagine glycan. Active-site charge relay system residues include Ser613, Asp690, and His725.

Belongs to the peptidase S9B family.

It is found in the secreted. It carries out the reaction Release of an N-terminal dipeptide, Xaa-Yaa-|-Zaa-, from a polypeptide, preferentially when Yaa is Pro, provided Zaa is neither Pro nor hydroxyproline.. Its function is as follows. Extracellular dipeptidyl-peptidase which removes N-terminal dipeptides sequentially from polypeptides having unsubstituted N-termini provided that the penultimate residue is proline. Contributes to pathogenicity. This Trichophyton equinum (Horse ringworm fungus) protein is Dipeptidyl peptidase 4 (DPP4).